A 149-amino-acid polypeptide reads, in one-letter code: Hydrogenase expression/formation protein HupT (149 aa).

Belongs to the HupJ family.

The chain is Hydrogenase expression/formation protein HupT (hupT) from Azotobacter chroococcum mcd 1.